The sequence spans 153 residues: Hsp90 co-chaperone HCH1 (153 aa).

The protein belongs to the AHA1 family. Monomer. Interacts with HSP82.

Its subcellular location is the cytoplasm. It is found in the nucleus. Co-chaperone that binds to the molecular chaperone HSP82 and stimulates its ATPase activity. Although not essential, it confers thermotolerance when intracellular levels of HSP82 are limiting. The polypeptide is Hsp90 co-chaperone HCH1 (HCH1) (Saccharomyces cerevisiae (strain ATCC 204508 / S288c) (Baker's yeast)).